A 152-amino-acid chain; its full sequence is Protein Smg homolog (152 aa).

This sequence belongs to the Smg family.

This Bordetella bronchiseptica (strain ATCC BAA-588 / NCTC 13252 / RB50) (Alcaligenes bronchisepticus) protein is Protein Smg homolog.